A 556-amino-acid chain; its full sequence is CDP-diacylglycerol--glycerol-3-phosphate 3-phosphatidyltransferase, mitochondrial (556 aa).

A mitochondrion-targeting transit peptide spans 1–28 (MAVAAAAAAGPVFWRRLLGLLPGRPGLA). A Phosphoserine modification is found at Ser49. 124-131 (ASLYLGTG) serves as a coordination point for ATP. 2 consecutive PLD phosphodiesterase domains span residues 215-241 (TIGL…SDSY) and 460-493 (RGWT…GYRS). Residues His220, Lys222, and Asp227 contribute to the active site.

The protein belongs to the CDP-alcohol phosphatidyltransferase class-II family.

The protein resides in the mitochondrion. It catalyses the reaction a CDP-1,2-diacyl-sn-glycerol + sn-glycerol 3-phosphate = a 1,2-diacyl-sn-glycero-3-phospho-(1'-sn-glycero-3'-phosphate) + CMP + H(+). Its pathway is phospholipid metabolism; phosphatidylglycerol biosynthesis; phosphatidylglycerol from CDP-diacylglycerol: step 1/2. Activated by calcium and magnesium and inhibited by other bivalent cations. Functionally, functions in the biosynthesis of the anionic phospholipids phosphatidylglycerol and cardiolipin. The protein is CDP-diacylglycerol--glycerol-3-phosphate 3-phosphatidyltransferase, mitochondrial (PGS1) of Pongo abelii (Sumatran orangutan).